The primary structure comprises 158 residues: RNA pyrophosphohydrolase (158 aa).

Residues 9–151 form the Nudix hydrolase domain; it reads PLRNGVGIVV…KLHVYKDVKE (143 aa). Residues 43–64 carry the Nudix box motif; that stretch reads GGVDKGEDYLTAAYRELEEETS.

It belongs to the Nudix hydrolase family. RppH subfamily. It depends on a divalent metal cation as a cofactor.

Functionally, accelerates the degradation of transcripts by removing pyrophosphate from the 5'-end of triphosphorylated RNA, leading to a more labile monophosphorylated state that can stimulate subsequent ribonuclease cleavage. This is RNA pyrophosphohydrolase from Pelagibacter ubique (strain HTCC1062).